The following is a 127-amino-acid chain: Small ribosomal subunit protein uS11 (127 aa).

Belongs to the universal ribosomal protein uS11 family. In terms of assembly, part of the 30S ribosomal subunit. Interacts with proteins S7 and S18. Binds to IF-3.

Located on the platform of the 30S subunit, it bridges several disparate RNA helices of the 16S rRNA. Forms part of the Shine-Dalgarno cleft in the 70S ribosome. This chain is Small ribosomal subunit protein uS11, found in Flavobacterium psychrophilum (strain ATCC 49511 / DSM 21280 / CIP 103535 / JIP02/86).